We begin with the raw amino-acid sequence, 430 residues long: Long-chain specific acyl-CoA dehydrogenase, mitochondrial (430 aa).

Residues 1–30 constitute a mitochondrion transit peptide; it reads MAARLLRGSLRVLGGHRAPRQLPAARCSHS. Lys42 carries the post-translational modification N6-acetyllysine. Ser54 is modified (phosphoserine). 2 positions are modified to N6-acetyllysine; alternate: Lys66 and Lys81. Lys66 and Lys81 each carry N6-succinyllysine; alternate. N6-acetyllysine is present on residues Lys92 and Lys95. At Lys165 the chain carries N6-succinyllysine. FAD-binding positions include 170-179 and 203-205; these read IAMTEPGAGS and FIS. Ser179 serves as a coordination point for substrate. Position 227-228 (227-228) interacts with substrate; the sequence is AH. Lys240 is modified (N6-succinyllysine). An N6-acetyllysine; alternate mark is found at Lys254 and Lys279. Lys254 and Lys279 each carry N6-succinyllysine; alternate. Substrate is bound by residues Tyr282 and 289–292; that span reads PQER. Glu291 acts as the Proton acceptor in catalysis. Arg317 contributes to the FAD binding site. Lys318 carries the post-translational modification N6-acetyllysine. N6-acetyllysine; alternate is present on Lys322. At Lys322 the chain carries N6-succinyllysine; alternate. Gln328 lines the FAD pocket. Lys358 carries the N6-acetyllysine modification. Ser362 is subject to Phosphoserine. 385 to 389 is a binding site for FAD; sequence QLHGG. 412 to 413 lines the substrate pocket; the sequence is GG. 414–416 is a binding site for FAD; that stretch reads TNE.

It belongs to the acyl-CoA dehydrogenase family. As to quaternary structure, homotetramer. Requires FAD as cofactor. Acetylation at Lys-318 and Lys-322 in proximity of the cofactor-binding sites strongly reduces catalytic activity. These sites are deacetylated by SIRT3.

It localises to the mitochondrion matrix. The catalysed reaction is a long-chain 2,3-saturated fatty acyl-CoA + oxidized [electron-transfer flavoprotein] + H(+) = a long-chain (2E)-enoyl-CoA + reduced [electron-transfer flavoprotein]. It catalyses the reaction hexanoyl-CoA + oxidized [electron-transfer flavoprotein] + H(+) = (2E)-hexenoyl-CoA + reduced [electron-transfer flavoprotein]. It carries out the reaction octanoyl-CoA + oxidized [electron-transfer flavoprotein] + H(+) = (2E)-octenoyl-CoA + reduced [electron-transfer flavoprotein]. The enzyme catalyses decanoyl-CoA + oxidized [electron-transfer flavoprotein] + H(+) = (2E)-decenoyl-CoA + reduced [electron-transfer flavoprotein]. The catalysed reaction is dodecanoyl-CoA + oxidized [electron-transfer flavoprotein] + H(+) = (2E)-dodecenoyl-CoA + reduced [electron-transfer flavoprotein]. It catalyses the reaction tetradecanoyl-CoA + oxidized [electron-transfer flavoprotein] + H(+) = (2E)-tetradecenoyl-CoA + reduced [electron-transfer flavoprotein]. It carries out the reaction oxidized [electron-transfer flavoprotein] + hexadecanoyl-CoA + H(+) = (2E)-hexadecenoyl-CoA + reduced [electron-transfer flavoprotein]. The enzyme catalyses octadecanoyl-CoA + oxidized [electron-transfer flavoprotein] + H(+) = (2E)-octadecenoyl-CoA + reduced [electron-transfer flavoprotein]. The catalysed reaction is eicosanoyl-CoA + oxidized [electron-transfer flavoprotein] + H(+) = (2E)-eicosenoyl-CoA + reduced [electron-transfer flavoprotein]. It catalyses the reaction docosanoyl-CoA + oxidized [electron-transfer flavoprotein] + H(+) = (2E)-docosenoyl-CoA + reduced [electron-transfer flavoprotein]. It carries out the reaction tetracosanoyl-CoA + oxidized [electron-transfer flavoprotein] + H(+) = (2E)-tetracosenoyl-CoA + reduced [electron-transfer flavoprotein]. The enzyme catalyses (5E)-tetradecenoyl-CoA + oxidized [electron-transfer flavoprotein] + H(+) = (2E,5E)-tetradecadienoyl-CoA + reduced [electron-transfer flavoprotein]. The catalysed reaction is (5Z)-tetradecenoyl-CoA + oxidized [electron-transfer flavoprotein] + H(+) = (2E,5Z)-tetradecadienoyl-CoA + reduced [electron-transfer flavoprotein]. It catalyses the reaction oxidized [electron-transfer flavoprotein] + (9Z)-octadecenoyl-CoA + H(+) = (2E,9Z)-octadecadienoyl-CoA + reduced [electron-transfer flavoprotein]. It functions in the pathway lipid metabolism; mitochondrial fatty acid beta-oxidation. Long-chain specific acyl-CoA dehydrogenase is one of the acyl-CoA dehydrogenases that catalyze the first step of mitochondrial fatty acid beta-oxidation, an aerobic process breaking down fatty acids into acetyl-CoA and allowing the production of energy from fats. The first step of fatty acid beta-oxidation consists in the removal of one hydrogen from C-2 and C-3 of the straight-chain fatty acyl-CoA thioester, resulting in the formation of trans-2-enoyl-CoA. Among the different mitochondrial acyl-CoA dehydrogenases, long-chain specific acyl-CoA dehydrogenase can act on saturated and unsaturated acyl-CoAs with 6 to 24 carbons with a preference for 8 to 18 carbons long primary chains. The polypeptide is Long-chain specific acyl-CoA dehydrogenase, mitochondrial (Homo sapiens (Human)).